The sequence spans 287 residues: 4-hydroxybenzoate octaprenyltransferase (287 aa).

The next 8 helical transmembrane spans lie at 19-39 (PIGS…AADG), 43-63 (LHVL…GCVI), 94-116 (LALA…PLVI), 135-155 (FFAI…PMGF), 160-180 (GEVP…AVAY), 207-227 (FDVA…GWVG), 234-254 (ALYF…YTLI), and 269-286 (NNWL…DYLI).

This sequence belongs to the UbiA prenyltransferase family. Mg(2+) serves as cofactor.

It is found in the cell inner membrane. The enzyme catalyses all-trans-octaprenyl diphosphate + 4-hydroxybenzoate = 4-hydroxy-3-(all-trans-octaprenyl)benzoate + diphosphate. It participates in cofactor biosynthesis; ubiquinone biosynthesis. Catalyzes the prenylation of para-hydroxybenzoate (PHB) with an all-trans polyprenyl group. Mediates the second step in the final reaction sequence of ubiquinone-8 (UQ-8) biosynthesis, which is the condensation of the polyisoprenoid side chain with PHB, generating the first membrane-bound Q intermediate 3-octaprenyl-4-hydroxybenzoate. This chain is 4-hydroxybenzoate octaprenyltransferase, found in Azoarcus sp. (strain BH72).